The primary structure comprises 217 residues: Salivary glue protein Sgs-3 (217 aa).

Residues 1–23 (MKLTIATVLASILLIGFANVANC) form the signal peptide. A compositionally biased stretch (low complexity) spans 45-130 (KSTSTTTTTT…KPTTHSTPKT (86 aa)). The disordered stretch occupies residues 45 to 163 (KSTSTTTTTT…KHTTPTTTTT (119 aa)). Residues 131-154 (KPTKHTTPKTKPTKHTTPKTKPTK) show a composition bias toward basic residues.

This is Salivary glue protein Sgs-3 (Sgs3) from Drosophila simulans (Fruit fly).